The chain runs to 83 residues: Small ribosomal subunit protein bS16 (83 aa).

It belongs to the bacterial ribosomal protein bS16 family.

The polypeptide is Small ribosomal subunit protein bS16 (Acinetobacter baumannii (strain AB307-0294)).